The primary structure comprises 183 residues: RNA 2',3'-cyclic phosphodiesterase (183 aa).

Residue H44 is the Proton donor of the active site. Short sequence motifs (HXTX) lie at residues H44 to L47 and H130 to L133. H130 functions as the Proton acceptor in the catalytic mechanism.

This sequence belongs to the 2H phosphoesterase superfamily. ThpR family.

The catalysed reaction is a 3'-end 2',3'-cyclophospho-ribonucleotide-RNA + H2O = a 3'-end 2'-phospho-ribonucleotide-RNA + H(+). Functionally, hydrolyzes RNA 2',3'-cyclic phosphodiester to an RNA 2'-phosphomonoester. This is RNA 2',3'-cyclic phosphodiesterase (ytlP) from Bacillus subtilis (strain 168).